A 178-amino-acid polypeptide reads, in one-letter code: MAQDQGEKENPMRELRIRKLCLNICVGESGDRLTRAAKVLEQLTGQTPVFSKARYTVRSFGIRRNEKIAVHCTVRGAKAEEILEKGLKVREYELRKNNFSDTGNFGFGIQEHIDLGIKYDPSIGIYGLDFYVVLGRPGFSITDKKRRTGCIGAKHRISKEEAMRWFQQKYDGIILPGK.

A2 is subject to N-acetylalanine. K38 is covalently cross-linked (Glycyl lysine isopeptide (Lys-Gly) (interchain with G-Cter in SUMO2)). 2 positions are modified to phosphothreonine: T44 and T47. The residue at position 52 (K52) is an N6-acetyllysine; alternate. A Glycyl lysine isopeptide (Lys-Gly) (interchain with G-Cter in SUMO2); alternate cross-link involves residue K52. The residue at position 85 (K85) is an N6-acetyllysine. K154 participates in a covalent cross-link: Glycyl lysine isopeptide (Lys-Gly) (interchain with G-Cter in SUMO2).

It belongs to the universal ribosomal protein uL5 family. Component of the large ribosomal subunit (LSU). Part of the 5S RNP complex, which is a LSU subcomplex composed of the 5S RNA, RPL5 and RPL11. Component of a hexameric 5S RNP precursor complex, composed of 5S RNA, RRS1, RPF2/BXDC1, RPL5, RPL11 and HEATR3; this complex acts as a precursor for ribosome assembly. Interacts with PML. Interacts with MDM2 (via its RanBP2-type zinc finger domain); negatively regulates MDM2-mediated TP53 ubiquitination and degradation. Interacts with NOP53; retains RPL11 into the nucleolus.

The protein resides in the nucleus. It is found in the nucleolus. Its subcellular location is the cytoplasm. Component of the ribosome, a large ribonucleoprotein complex responsible for the synthesis of proteins in the cell. The small ribosomal subunit (SSU) binds messenger RNAs (mRNAs) and translates the encoded message by selecting cognate aminoacyl-transfer RNA (tRNA) molecules. The large subunit (LSU) contains the ribosomal catalytic site termed the peptidyl transferase center (PTC), which catalyzes the formation of peptide bonds, thereby polymerizing the amino acids delivered by tRNAs into a polypeptide chain. The nascent polypeptides leave the ribosome through a tunnel in the LSU and interact with protein factors that function in enzymatic processing, targeting, and the membrane insertion of nascent chains at the exit of the ribosomal tunnel. As part of the 5S RNP/5S ribonucleoprotein particle it is an essential component of the LSU, required for its formation and the maturation of rRNAs. It also couples ribosome biogenesis to p53/TP53 activation. As part of the 5S RNP it accumulates in the nucleoplasm and inhibits MDM2, when ribosome biogenesis is perturbed, mediating the stabilization and the activation of TP53. Promotes nucleolar location of PML. In Pongo abelii (Sumatran orangutan), this protein is Large ribosomal subunit protein uL5 (RPL11).